Consider the following 99-residue polypeptide: MVKAPRGYRHRTRKVFSKHIREKGAVPPLSLLMIDYKPGDKVHIVVNPAIHKGMPHRRYHGKTGTIIGKRGKAYIVKITLGDKEKTLFIRPEHLRPAKA.

This sequence belongs to the eukaryotic ribosomal protein eL21 family.

The polypeptide is Large ribosomal subunit protein eL21 (Staphylothermus marinus (strain ATCC 43588 / DSM 3639 / JCM 9404 / F1)).